An 879-amino-acid chain; its full sequence is Translation initiation factor IF-2 (879 aa).

Disordered stretches follow at residues 45 to 216 and 228 to 293; these read AGHM…ERKR and SYEE…EKPV. 3 stretches are compositionally biased toward basic and acidic residues: residues 60–72, 83–99, and 107–163; these read NAAK…DKNS, RKTD…KISP, and AEKK…ERLQ. A compositionally biased stretch (low complexity) spans 164–173; it reads MEAALQAQMQ. 3 stretches are compositionally biased toward basic and acidic residues: residues 174–216, 228–271, and 280–291; these read EQER…ERKR, SYEE…ERRN, and RNNDNKKGKFEK. Residues 380–549 form the tr-type G domain; it reads VRAPVVTIMG…LIQAEMLELT (170 aa). The segment at 389-396 is G1; it reads GHVDHGKT. 389–396 contributes to the GTP binding site; the sequence is GHVDHGKT. The segment at 414–418 is G2; that stretch reads GITQH. Residues 435–438 are G3; it reads DTPG. Residues 435 to 439 and 489 to 492 contribute to the GTP site; these read DTPGH and NKMD. Positions 489–492 are G4; it reads NKMD. The tract at residues 525–527 is G5; it reads SAK.

The protein belongs to the TRAFAC class translation factor GTPase superfamily. Classic translation factor GTPase family. IF-2 subfamily.

The protein localises to the cytoplasm. One of the essential components for the initiation of protein synthesis. Protects formylmethionyl-tRNA from spontaneous hydrolysis and promotes its binding to the 30S ribosomal subunits. Also involved in the hydrolysis of GTP during the formation of the 70S ribosomal complex. This chain is Translation initiation factor IF-2, found in Dichelobacter nodosus (strain VCS1703A).